Reading from the N-terminus, the 60-residue chain is Toxin C10S2C2 (60 aa).

4 cysteine pairs are disulfide-bonded: Cys3-Cys22, Cys17-Cys39, Cys41-Cys52, and Cys53-Cys58. The segment at 41–48 (CPTAMWPY) is important for binding to L-type calcium channels.

Belongs to the three-finger toxin family. Short-chain subfamily. L-type calcium blocker sub-subfamily. Expressed by the venom gland.

It localises to the secreted. Its function is as follows. This specific blocker of the L-type calcium channel (Cav1/CACNA1) is a smooth muscle relaxant and an inhibitor of cardiac contractions. The sequence is that of Toxin C10S2C2 from Dendroaspis angusticeps (Eastern green mamba).